The chain runs to 39 residues: Photosystem II reaction center protein J (39 aa).

The chain crosses the membrane as a helical span at residues 9–29 (LWLVATVGGIAAITVLGIFIY).

This sequence belongs to the PsbJ family. PSII is composed of 1 copy each of membrane proteins PsbA, PsbB, PsbC, PsbD, PsbE, PsbF, PsbH, PsbI, PsbJ, PsbK, PsbL, PsbM, PsbT, PsbX, PsbY, PsbZ, Psb30/Ycf12, at least 3 peripheral proteins of the oxygen-evolving complex and a large number of cofactors. It forms dimeric complexes.

The protein resides in the plastid. It is found in the chloroplast thylakoid membrane. In terms of biological role, one of the components of the core complex of photosystem II (PSII). PSII is a light-driven water:plastoquinone oxidoreductase that uses light energy to abstract electrons from H(2)O, generating O(2) and a proton gradient subsequently used for ATP formation. It consists of a core antenna complex that captures photons, and an electron transfer chain that converts photonic excitation into a charge separation. This Pyropia yezoensis (Susabi-nori) protein is Photosystem II reaction center protein J.